The sequence spans 360 residues: Mitogen-activated protein kinase 1 (360 aa).

Alanine 2 carries the N-acetylalanine modification. The Protein kinase domain occupies 25 to 313 (YTNLSYIGEG…VEQALAHPYL (289 aa)). Serine 29 bears the Phosphoserine; by SGK1 mark. ATP contacts are provided by residues 31–39 (IGEGAYGMV) and lysine 54. Catalysis depends on aspartate 149, which acts as the Proton acceptor. Position 185 is a phosphothreonine; by MAP2K1 and MAP2K2 (threonine 185). A TXY motif is present at residues 185–187 (TEY). Tyrosine 187 bears the Phosphotyrosine; by MAP2K1 and MAP2K2 mark. Threonine 190 carries the phosphothreonine; by autocatalysis modification. Serine 246 and serine 248 each carry phosphoserine. The DNA-binding element occupies 259–277 (KARNYLLSLPHKNKVPWNR). Serine 284 carries the post-translational modification Phosphoserine. The Cytoplasmic retention motif signature appears at 318–322 (DPSDE). Positions 327–333 (APFKFDM) match the Nuclear translocation motif motif.

Belongs to the protein kinase superfamily. CMGC Ser/Thr protein kinase family. MAP kinase subfamily. Binds both upstream activators and downstream substrates in multimolecular complexes. This interaction inhibits its tyrosine-kinase activity. Interacts with ADAM15, ARHGEF2, ARRB2, DAPK1 (via death domain), HSF4, IER3, IPO7, NISCH, SGK1, and isoform 1 of NEK2. Interacts (via phosphorylated form) with TPR (via C-terminal region and phosphorylated form); the interaction requires dimerization of MAPK1/ERK2 and increases following EGF stimulation. Interacts with MAP2K1. Interacts with DUSP6. Interacts (phosphorylated form) with CAV2 ('Tyr-19'-phosphorylated form); the interaction, promoted by insulin, leads to nuclear location and MAPK1 activation. Interacts with MORG1, PEA15 and MKNK2. MKNK2 isoform 1 binding prevents from dephosphorylation and inactivation. Interacts with DCC. The phosphorylated form interacts with PML (isoform PML-4). Interacts with STYX. Interacts with CDK2AP2. Interacts with CAVIN4. Interacts with DUSP7; the interaction enhances DUSP7 phosphatase activity. Interacts with GIT1; this interaction is necessary for MAPK1 localization to focal adhesions. Interacts with ZNF263. Interacts with phosphoglycerate kinase PGK1; the interaction is direct, occurs under hypoxic conditions, and promotes interaction between PGK1 and PIN1. In terms of assembly, (Microbial infection) Interacts with HIV-1 Nef through its SH3 domain. Mg(2+) serves as cofactor. Phosphorylated upon KIT and FLT3 signaling. Dually phosphorylated on Thr-185 and Tyr-187, which activates the enzyme. Undergoes regulatory phosphorylation on additional residues such as Ser-246 and Ser-248 in the kinase insert domain (KID) These phosphorylations, which are probably mediated by more than one kinase, are important for binding of MAPK1/ERK2 to importin-7 (IPO7) and its nuclear translocation. In addition, autophosphorylation of Thr-190 was shown to affect the subcellular localization of MAPK1/ERK2 as well. Ligand-activated ALK induces tyrosine phosphorylation. Dephosphorylated by PTPRJ at Tyr-187. Phosphorylation on Ser-29 by SGK1 results in its activation by enhancing its interaction with MAP2K1/MEK1 and MAP2K2/MEK2. DUSP3 and DUSP6 dephosphorylate specifically MAPK1/ERK2 and MAPK3/ERK1 whereas DUSP9 dephosphorylates a broader range of MAPKs. Dephosphorylated by DUSP1 and DUSP2 at Thr-185 and Tyr-187. In terms of processing, ISGylated. Post-translationally, ubiquitinated by TRIM15 via 'Lys-63'-linked ubiquitination; leading to activation. Deubiquitinated by CYLD.

Its subcellular location is the cytoplasm. It localises to the cytoskeleton. The protein localises to the spindle. The protein resides in the nucleus. It is found in the microtubule organizing center. Its subcellular location is the centrosome. It localises to the membrane. The protein localises to the caveola. The protein resides in the cell junction. It is found in the focal adhesion. It carries out the reaction L-seryl-[protein] + ATP = O-phospho-L-seryl-[protein] + ADP + H(+). The enzyme catalyses L-threonyl-[protein] + ATP = O-phospho-L-threonyl-[protein] + ADP + H(+). With respect to regulation, phosphorylated by MAP2K1/MEK1 and MAP2K2/MEK2 on Thr-185 and Tyr-187 in response to external stimuli like insulin or NGF. Both phosphorylations are required for activity. This phosphorylation causes dramatic conformational changes, which enable full activation and interaction of MAPK1/ERK2 with its substrates. Phosphorylation on Ser-29 by SGK1 results in its activation by enhancing its interaction with MAP2K1/MEK1 and MAP2K2/MEK2. Dephosphorylated and inactivated by DUSP1, DUSP3, DUSP6 and DUSP9. Inactivated by pyrimidylpyrrole inhibitors. Functionally, serine/threonine kinase which acts as an essential component of the MAP kinase signal transduction pathway. MAPK1/ERK2 and MAPK3/ERK1 are the 2 MAPKs which play an important role in the MAPK/ERK cascade. They participate also in a signaling cascade initiated by activated KIT and KITLG/SCF. Depending on the cellular context, the MAPK/ERK cascade mediates diverse biological functions such as cell growth, adhesion, survival and differentiation through the regulation of transcription, translation, cytoskeletal rearrangements. The MAPK/ERK cascade also plays a role in initiation and regulation of meiosis, mitosis, and postmitotic functions in differentiated cells by phosphorylating a number of transcription factors. About 160 substrates have already been discovered for ERKs. Many of these substrates are localized in the nucleus, and seem to participate in the regulation of transcription upon stimulation. However, other substrates are found in the cytosol as well as in other cellular organelles, and those are responsible for processes such as translation, mitosis and apoptosis. Moreover, the MAPK/ERK cascade is also involved in the regulation of the endosomal dynamics, including lysosome processing and endosome cycling through the perinuclear recycling compartment (PNRC); as well as in the fragmentation of the Golgi apparatus during mitosis. The substrates include transcription factors (such as ATF2, BCL6, ELK1, ERF, FOS, HSF4 or SPZ1), cytoskeletal elements (such as CANX, CTTN, GJA1, MAP2, MAPT, PXN, SORBS3 or STMN1), regulators of apoptosis (such as BAD, BTG2, CASP9, DAPK1, IER3, MCL1 or PPARG), regulators of translation (such as EIF4EBP1 and FXR1) and a variety of other signaling-related molecules (like ARHGEF2, DCC, FRS2 or GRB10). Protein kinases (such as RAF1, RPS6KA1/RSK1, RPS6KA3/RSK2, RPS6KA2/RSK3, RPS6KA6/RSK4, SYK, MKNK1/MNK1, MKNK2/MNK2, RPS6KA5/MSK1, RPS6KA4/MSK2, MAPKAPK3 or MAPKAPK5) and phosphatases (such as DUSP1, DUSP4, DUSP6 or DUSP16) are other substrates which enable the propagation the MAPK/ERK signal to additional cytosolic and nuclear targets, thereby extending the specificity of the cascade. Mediates phosphorylation of TPR in response to EGF stimulation. May play a role in the spindle assembly checkpoint. Phosphorylates PML and promotes its interaction with PIN1, leading to PML degradation. Phosphorylates CDK2AP2. Phosphorylates phosphoglycerate kinase PGK1 under hypoxic conditions to promote its targeting to the mitochondrion and suppress the formation of acetyl-coenzyme A from pyruvate. Its function is as follows. Acts as a transcriptional repressor. Binds to a [GC]AAA[GC] consensus sequence. Repress the expression of interferon gamma-induced genes. Seems to bind to the promoter of CCL5, DMP1, IFIH1, IFITM1, IRF7, IRF9, LAMP3, OAS1, OAS2, OAS3 and STAT1. Transcriptional activity is independent of kinase activity. The protein is Mitogen-activated protein kinase 1 of Homo sapiens (Human).